Here is a 944-residue protein sequence, read N- to C-terminus: 2-oxoglutarate dehydrogenase E1 component (944 aa).

The disordered stretch occupies residues Arg914–Asn944. Over residues Pro925–Val936 the composition is skewed to basic and acidic residues.

The protein belongs to the alpha-ketoglutarate dehydrogenase family. As to quaternary structure, homodimer. Part of the 2-oxoglutarate dehydrogenase (OGDH) complex composed of E1 (2-oxoglutarate dehydrogenase), E2 (dihydrolipoamide succinyltransferase) and E3 (dihydrolipoamide dehydrogenase); the complex contains multiple copies of the three enzymatic components (E1, E2 and E3). The cofactor is thiamine diphosphate.

The catalysed reaction is N(6)-[(R)-lipoyl]-L-lysyl-[protein] + 2-oxoglutarate + H(+) = N(6)-[(R)-S(8)-succinyldihydrolipoyl]-L-lysyl-[protein] + CO2. Its function is as follows. E1 component of the 2-oxoglutarate dehydrogenase (OGDH) complex which catalyzes the decarboxylation of 2-oxoglutarate, the first step in the conversion of 2-oxoglutarate to succinyl-CoA and CO(2). The sequence is that of 2-oxoglutarate dehydrogenase E1 component from Bacillus subtilis (strain 168).